We begin with the raw amino-acid sequence, 94 residues long: Small ribosomal subunit protein bS6 (94 aa).

This sequence belongs to the bacterial ribosomal protein bS6 family.

Binds together with bS18 to 16S ribosomal RNA. The protein is Small ribosomal subunit protein bS6 of Clostridium botulinum (strain 657 / Type Ba4).